The following is a 111-amino-acid chain: uncharacterized protein (111 aa).

It to B.subtilis XkdW.

This is an uncharacterized protein from Bacillus subtilis (strain 168).